Reading from the N-terminus, the 95-residue chain is Large ribosomal subunit protein uL23 (95 aa).

The protein belongs to the universal ribosomal protein uL23 family. Part of the 50S ribosomal subunit. Contacts protein L29, and trigger factor when it is bound to the ribosome.

Functionally, one of the early assembly proteins it binds 23S rRNA. One of the proteins that surrounds the polypeptide exit tunnel on the outside of the ribosome. Forms the main docking site for trigger factor binding to the ribosome. This chain is Large ribosomal subunit protein uL23, found in Bacillus subtilis (strain 168).